A 232-amino-acid polypeptide reads, in one-letter code: Ubiquinone biosynthesis O-methyltransferase (232 aa).

Positions 36, 55, 76, and 120 each coordinate S-adenosyl-L-methionine.

This sequence belongs to the methyltransferase superfamily. UbiG/COQ3 family.

The catalysed reaction is a 3-demethylubiquinol + S-adenosyl-L-methionine = a ubiquinol + S-adenosyl-L-homocysteine + H(+). It catalyses the reaction a 3-(all-trans-polyprenyl)benzene-1,2-diol + S-adenosyl-L-methionine = a 2-methoxy-6-(all-trans-polyprenyl)phenol + S-adenosyl-L-homocysteine + H(+). The protein operates within cofactor biosynthesis; ubiquinone biosynthesis. In terms of biological role, O-methyltransferase that catalyzes the 2 O-methylation steps in the ubiquinone biosynthetic pathway. This chain is Ubiquinone biosynthesis O-methyltransferase, found in Burkholderia ambifaria (strain MC40-6).